Reading from the N-terminus, the 156-residue chain is ATP synthase subunit b (156 aa).

A helical membrane pass occupies residues 11-31 (LIAFVVFVIFCMKYVWPPIIG).

It belongs to the ATPase B chain family. As to quaternary structure, F-type ATPases have 2 components, F(1) - the catalytic core - and F(0) - the membrane proton channel. F(1) has five subunits: alpha(3), beta(3), gamma(1), delta(1), epsilon(1). F(0) has three main subunits: a(1), b(2) and c(10-14). The alpha and beta chains form an alternating ring which encloses part of the gamma chain. F(1) is attached to F(0) by a central stalk formed by the gamma and epsilon chains, while a peripheral stalk is formed by the delta and b chains.

The protein localises to the cell inner membrane. Its function is as follows. F(1)F(0) ATP synthase produces ATP from ADP in the presence of a proton or sodium gradient. F-type ATPases consist of two structural domains, F(1) containing the extramembraneous catalytic core and F(0) containing the membrane proton channel, linked together by a central stalk and a peripheral stalk. During catalysis, ATP synthesis in the catalytic domain of F(1) is coupled via a rotary mechanism of the central stalk subunits to proton translocation. Functionally, component of the F(0) channel, it forms part of the peripheral stalk, linking F(1) to F(0). The protein is ATP synthase subunit b of Colwellia psychrerythraea (strain 34H / ATCC BAA-681) (Vibrio psychroerythus).